The sequence spans 335 residues: Putative type I specificity subunit S.MpnORF89P (335 aa).

The protein belongs to the type-I restriction system S methylase family. As to quaternary structure, the methyltransferase is composed of M and S polypeptides.

The specificity (S) subunit of a type I methyltransferase (MTase); this subunit dictates DNA sequence specificity. The single R subunit has multiple frameshifts and is probably not expressed. The polypeptide is Putative type I specificity subunit S.MpnORF89P (Mycoplasma pneumoniae (strain ATCC 29342 / M129 / Subtype 1) (Mycoplasmoides pneumoniae)).